We begin with the raw amino-acid sequence, 245 residues long: tRNA (guanine-N(1)-)-methyltransferase (245 aa).

Residues G112 and 132 to 137 (IGDFVL) contribute to the S-adenosyl-L-methionine site.

It belongs to the RNA methyltransferase TrmD family. As to quaternary structure, homodimer.

Its subcellular location is the cytoplasm. It carries out the reaction guanosine(37) in tRNA + S-adenosyl-L-methionine = N(1)-methylguanosine(37) in tRNA + S-adenosyl-L-homocysteine + H(+). Its function is as follows. Specifically methylates guanosine-37 in various tRNAs. This chain is tRNA (guanine-N(1)-)-methyltransferase, found in Geobacter metallireducens (strain ATCC 53774 / DSM 7210 / GS-15).